Here is a 34-residue protein sequence, read N- to C-terminus: NLVDIPIPANDDAIKSIKLIVSKLSTGIQQGQSY.

It belongs to the universal ribosomal protein uS2 family.

Its subcellular location is the plastid. The protein resides in the chloroplast. The sequence is that of Small ribosomal subunit protein uS2c (rps2) from Ochrosphaera neapolitana.